Reading from the N-terminus, the 530-residue chain is Synembryn-like chaperone C3E7.04c (530 aa).

The chain crosses the membrane as a helical span at residues 492–512; sequence SFIYHCYHSFVGPIHILLLMF.

The protein belongs to the synembryn family.

It localises to the membrane. Functionally, chaperone that specifically binds and folds some, but not all, nascent G alpha proteins prior to G protein heterotrimer formation, promoting their stability and activity. Also acts as a guanine nucleotide exchange factor (GEF) for G alpha proteins by stimulating exchange of bound GDP for free GTP. The chain is Synembryn-like chaperone C3E7.04c from Schizosaccharomyces pombe (strain 972 / ATCC 24843) (Fission yeast).